Consider the following 2784-residue polypeptide: Cilia- and flagella-associated protein 46 (2784 aa).

A TPR 1 repeat occupies 129-162; that stretch reads GLEVAAANQPRYQFLVYNASVHHWRVVAPLHRDG. Residues 242–268 adopt a coiled-coil conformation; sequence TAAAAKLTELQKDVARLQVHLATLAAA. The stretch at 401–434 is one TPR 2 repeat; sequence SLAPVVVAAHVKALEQLEDVLTTFTKLADVEGIH. Disordered regions lie at residues 543–562 and 581–607; these read SAEPANPEEEAVSLIERSKE and RDLPHPPPPAPTDPPGPDRDAAHAAAR. Residues 585-595 are compositionally biased toward pro residues; sequence HPPPPAPTDPP. The stretch at 644-665 forms a coiled coil; the sequence is AVDREMVLLQAQLAHYEAEAAI. A disordered region spans residues 670-697; the sequence is RRRADISPPTRPSPPEVDGEGVRQPPAT. The stretch at 708–743 is one TPR 3 repeat; that stretch reads ASVRSMRGAMSVNEPWLTLNNAVQLYNAALPLMQQH. Disordered stretches follow at residues 799–837 and 929–954; these read DAGQELEDDDDEDSLDEDGNPPPAGDAGPHFNRRSPAYK and RVNEEKQPAGAGAEKGGGDKGRKPHG. Residues 802–817 are compositionally biased toward acidic residues; it reads QELEDDDDEDSLDEDG. Residues 976 to 1009 form a TPR 4 repeat; that stretch reads LELWAKMARAVADAGVWPAALECSAAALAALPGA. Residues 1275–1288 are compositionally biased toward acidic residues; sequence TGDLDGDGTDDEDD. 2 disordered regions span residues 1275 to 1351 and 1640 to 1673; these read TGDL…RVPE and AAGGGRGGRESPSPHDDGIHYIGGPAPGDSHGQL. The segment covering 1298 to 1311 has biased composition (gly residues); it reads SGGGSSSGRAGGGF. Positions 1646–1658 are enriched in basic and acidic residues; the sequence is GGRESPSPHDDGI. 2 TPR repeats span residues 1712 to 1745 and 1854 to 1886; these read HDVWLKKGDYLLRRGHYAAARQLLSRARAHAADC and MEMLRGQGVSTWRKSYDGAVTLVNQAIMALAAR. Residues 1961–1984 adopt a coiled-coil conformation; that stretch reads RLAEVQLAAAEERERLAGADREKA. Disordered regions lie at residues 2068–2112, 2278–2303, 2346–2389, and 2441–2465; these read RPFV…EAAA, ATAEPTPPLNAEKSKKKTDASAPAAA, AAKG…PGAA, and LPLPPPGSPDGKKEKKDKKEAAGPT. A compositionally biased stretch (pro residues) spans 2069–2083; the sequence is PFVPPPKPPGAPKRP. The segment covering 2087 to 2096 has biased composition (acidic residues); that stretch reads AEEEEDEEGP. Residues 2097 to 2112 are compositionally biased toward low complexity; it reads DTAAADAAAEAAEAAA. Residues 2378 to 2389 are compositionally biased toward low complexity; that stretch reads SKQGPKSGPGAA. The span at 2450 to 2461 shows a compositional bias: basic and acidic residues; sequence DGKKEKKDKKEA. One copy of the TPR 7 repeat lies at 2613-2646; that stretch reads ATGGPCTGLLFLGVGRFAAHVPPAVLASAPLGGC.

Belongs to the CFAP46 family. As to quaternary structure, part of the PDCP1 complex composed of CFAP46, CFAP54, CFAP74 and CFAP221; the PDCP1 complex binds calmodulin.

The protein localises to the cytoplasm. It localises to the cytoskeleton. The protein resides in the cilium axoneme. Functionally, as part of the central apparatus of the cilium axoneme plays a role in cilium movement and thereby cell motility. This Chlamydomonas reinhardtii (Chlamydomonas smithii) protein is Cilia- and flagella-associated protein 46.